The primary structure comprises 252 residues: Small ribosomal subunit protein eS1 (252 aa).

It belongs to the eukaryotic ribosomal protein eS1 family. In terms of assembly, component of the small ribosomal subunit. Mature ribosomes consist of a small (40S) and a large (60S) subunit. The 40S subunit contains about 33 different proteins and 1 molecule of RNA (18S). The 60S subunit contains about 49 different proteins and 3 molecules of RNA (25S, 5.8S and 5S).

It localises to the cytoplasm. This is Small ribosomal subunit protein eS1 from Enterocytozoon bieneusi (strain H348) (Microsporidian parasite).